We begin with the raw amino-acid sequence, 358 residues long: Arginase (358 aa).

Residues His-146, Asp-174, His-176, and Asp-178 each coordinate Mn(2+). Substrate contacts are provided by residues 176-180, 187-189, and Asp-233; these read HADIN and SGN. Residues Asp-280 and Asp-282 each coordinate Mn(2+). Residues Thr-294 and Glu-325 each coordinate substrate.

This sequence belongs to the arginase family. In terms of assembly, homohexamer. Requires Mn(2+) as cofactor.

Its subcellular location is the cytoplasm. The catalysed reaction is L-arginine + H2O = urea + L-ornithine. It participates in nitrogen metabolism; urea cycle; L-ornithine and urea from L-arginine: step 1/1. This Neurospora crassa (strain ATCC 24698 / 74-OR23-1A / CBS 708.71 / DSM 1257 / FGSC 987) protein is Arginase (aga-1).